Consider the following 346-residue polypeptide: MDTAERLDLVTRHTTEVVTEDELRTLFEESDPSAYIGYAPTGEMHIGHFTTMRKLADFLRAGVDVTVLIADLHAHLDDNKSPFDLLDARSAYYETAIEGMIEAAGADPEDVTFVRGTDFQLDEEYTLEMYRMAAETTISRTQRAASEVVRESESPNLGGLIYPLMQTLDVKALDADIAYGGVDQRGIYMLSREILPDHGGESPICLFAPLLSGLSGGKMSASDEASKVNLTDSPDEVDEKINQAYCPAGEVEENGVLEYLQHLVFPVLDVRGDSFVVERPEEYGGDLTYESYDEVESDFVSGELHPADLKPSAASAISDVIDPVRERLADKDELLAEAYPEKYGAE.

Tyr35 is an L-tyrosine binding site. A 'HIGH' region motif is present at residues 40–48; sequence PTGEMHIGH. Positions 162, 166, 169, and 184 each coordinate L-tyrosine.

The protein belongs to the class-I aminoacyl-tRNA synthetase family. TyrS type 3 subfamily. Homodimer.

Its subcellular location is the cytoplasm. The catalysed reaction is tRNA(Tyr) + L-tyrosine + ATP = L-tyrosyl-tRNA(Tyr) + AMP + diphosphate + H(+). Its function is as follows. Catalyzes the attachment of tyrosine to tRNA(Tyr) in a two-step reaction: tyrosine is first activated by ATP to form Tyr-AMP and then transferred to the acceptor end of tRNA(Tyr). This chain is Tyrosine--tRNA ligase, found in Haloarcula marismortui (strain ATCC 43049 / DSM 3752 / JCM 8966 / VKM B-1809) (Halobacterium marismortui).